We begin with the raw amino-acid sequence, 410 residues long: Serine/threonine transporter SstT (410 aa).

A run of 9 helical transmembrane segments spans residues 11–31, 45–65, 79–99, 138–158, 179–199, 214–234, 285–305, 327–347, and 353–373; these read VSLVKRIIIGIIIGITLAVTV, FVGALKAVAPVLVFFLVISAI, ILILYGFSTFLASLTAVVASF, ALLNANYIGILTWAVLLGIAL, IVTWVINFAPIGIMGLVFDAI, LAVLLGTMCFVAFVMNPLIVF, ISIPLGATINMAGAAVTISVL, VLSAIAAAGASGVAGGSLLLI, and LFGIPNDIAMQVVGVGFIIGV.

This sequence belongs to the dicarboxylate/amino acid:cation symporter (DAACS) (TC 2.A.23) family.

It localises to the cell membrane. The enzyme catalyses L-serine(in) + Na(+)(in) = L-serine(out) + Na(+)(out). It catalyses the reaction L-threonine(in) + Na(+)(in) = L-threonine(out) + Na(+)(out). Involved in the import of serine and threonine into the cell, with the concomitant import of sodium (symport system). This Geobacillus thermodenitrificans (strain NG80-2) protein is Serine/threonine transporter SstT.